A 443-amino-acid chain; its full sequence is Anthocyanidin 3-O-glucoside 5-O-glucosyltransferase 2 (443 aa).

The signal sequence occupies residues 1–22; it reads MVRRRVLLATFPAQGHINPALQ. His16 acts as the Proton acceptor in catalysis. His16 contributes to the an anthocyanidin binding site. UDP-alpha-D-glucose-binding residues include Gln340, His355, Trp358, Asn359, Ser360, Glu363, Asp379, and Gln380.

This sequence belongs to the UDP-glycosyltransferase family.

The enzyme catalyses an anthocyanidin 3-O-beta-D-glucoside + UDP-alpha-D-glucose = an anthocyanidin 3,5-di-O-beta-D-glucoside + UDP + 2 H(+). It participates in pigment biosynthesis; anthocyanin biosynthesis. Catalyzes the glucosylation at the O-5 position of anthocyanidin 3-glucosides to form anthocyanidin 3,5-di-O-glucosides using UDP-glucose as sugar donor. Anthocyanidin 3,5-di-O-glucosides are molecules that are responsible for pigmentation. Also acts on anthocyanidin 3-O-(6-O-malonylglucoside). Much less active with hydroxycinnamoylglucose derivatives. No activity in the absence of the 3-O-glucoside group. The chain is Anthocyanidin 3-O-glucoside 5-O-glucosyltransferase 2 (PF3R6) from Perilla frutescens (Beefsteak mint).